A 384-amino-acid polypeptide reads, in one-letter code: Mannitol-1-phosphate 5-dehydrogenase (384 aa).

NAD(+) is bound at residue 4-15 (AVHFGAGNIGRG).

Belongs to the mannitol dehydrogenase family.

It carries out the reaction D-mannitol 1-phosphate + NAD(+) = beta-D-fructose 6-phosphate + NADH + H(+). The chain is Mannitol-1-phosphate 5-dehydrogenase from Lacticaseibacillus paracasei (strain ATCC 334 / BCRC 17002 / CCUG 31169 / CIP 107868 / KCTC 3260 / NRRL B-441) (Lactobacillus paracasei).